A 60-amino-acid polypeptide reads, in one-letter code: Large ribosomal subunit protein bL32 (60 aa).

A disordered region spans residues 1-21 (MAVQQNKKSPSKRGMHRAHNA). The span at 9–19 (SPSKRGMHRAH) shows a compositional bias: basic residues.

This sequence belongs to the bacterial ribosomal protein bL32 family.

The sequence is that of Large ribosomal subunit protein bL32 from Albidiferax ferrireducens (strain ATCC BAA-621 / DSM 15236 / T118) (Rhodoferax ferrireducens).